The primary structure comprises 299 residues: Acetylglutamate kinase (299 aa).

Residues 70–71 (GG), arginine 92, and asparagine 186 each bind substrate.

The protein belongs to the acetylglutamate kinase family. ArgB subfamily.

It localises to the cytoplasm. It carries out the reaction N-acetyl-L-glutamate + ATP = N-acetyl-L-glutamyl 5-phosphate + ADP. Its pathway is amino-acid biosynthesis; L-arginine biosynthesis; N(2)-acetyl-L-ornithine from L-glutamate: step 2/4. Its function is as follows. Catalyzes the ATP-dependent phosphorylation of N-acetyl-L-glutamate. The chain is Acetylglutamate kinase from Petrotoga mobilis (strain DSM 10674 / SJ95).